The chain runs to 252 residues: Uracil-DNA glycosylase (252 aa).

Residue D87 is the Proton acceptor of the active site.

It belongs to the uracil-DNA glycosylase (UDG) superfamily. UNG family.

The protein resides in the host nucleus. It catalyses the reaction Hydrolyzes single-stranded DNA or mismatched double-stranded DNA and polynucleotides, releasing free uracil.. In terms of biological role, excises uracil residues from the DNA which can arise as a result of misincorporation of dUMP residues by DNA polymerase or deamination of cytosines. Therefore may reduce deleterious uracil incorporation into the viral genome, particularly in terminally differentiated cells which lack DNA repair enzymes. The polypeptide is Uracil-DNA glycosylase (46) (Saimiri sciureus (Common squirrel monkey)).